A 1485-amino-acid polypeptide reads, in one-letter code: Chromosome partition protein MukB (1485 aa).

34–41 (GGNGAGKS) contacts ATP. Coiled-coil stretches lie at residues 311-480 (EMAR…EAYR) and 519-665 (GARL…RLSQ). Positions 666-783 (PGGAEDARLI…SLPLFGRAAR (118 aa)) are flexible hinge. Coiled coils occupy residues 832–1115 (NDPE…QAKA) and 1209–1265 (IDAI…LQSV).

Belongs to the SMC family. MukB subfamily. As to quaternary structure, homodimerization via its hinge domain. Binds to DNA via its C-terminal region. Interacts, and probably forms a ternary complex, with MukE and MukF via its C-terminal region. The complex formation is stimulated by calcium or magnesium. Interacts with tubulin-related protein FtsZ.

The protein resides in the cytoplasm. It localises to the nucleoid. Its function is as follows. Plays a central role in chromosome condensation, segregation and cell cycle progression. Functions as a homodimer, which is essential for chromosome partition. Involved in negative DNA supercoiling in vivo, and by this means organize and compact chromosomes. May achieve or facilitate chromosome segregation by condensation DNA from both sides of a centrally located replisome during cell division. This chain is Chromosome partition protein MukB, found in Edwardsiella ictaluri (strain 93-146).